We begin with the raw amino-acid sequence, 42 residues long: Lebocin-like anionic peptide 1 (42 aa).

Hemolymph.

The protein localises to the secreted. Its function is as follows. Antimicrobial protein. Has antibacterial activity against the Gram-positive bacteria M.luteus (MIC=22.7 uM) and L.monocytogenes (MIC=90.9 uM). Lacks antibacterial activity against the Gram-positive bacteria B.circulans, S.aureus, and S.lutea, and the Gram-negative bacteria E.coli D31, E.coli ATCC 25922, and S.typhimurium. Has antifungal activity against A.niger (MIC=90.9 uM) and T.harzianum (MIC=90.9 uM), but lacks antifungal activity against S.cerevisiae, P.pastoris, Z.marxianus, C.albicans, C.fructus, and F.oxysporum. The chain is Lebocin-like anionic peptide 1 from Galleria mellonella (Greater wax moth).